A 283-amino-acid chain; its full sequence is Formamidopyrimidine-DNA glycosylase (283 aa).

P2 acts as the Schiff-base intermediate with DNA in catalysis. The Proton donor role is filled by E3. K58 acts as the Proton donor; for beta-elimination activity in catalysis. DNA is bound by residues H100, R119, and R162. The FPG-type zinc finger occupies 247-283 (RVYGREGQPCVTPGCRGLVGRIVQSGRSSFHCPECQR). The active-site Proton donor; for delta-elimination activity is R273.

Belongs to the FPG family. Monomer. Zn(2+) is required as a cofactor.

It catalyses the reaction Hydrolysis of DNA containing ring-opened 7-methylguanine residues, releasing 2,6-diamino-4-hydroxy-5-(N-methyl)formamidopyrimidine.. The enzyme catalyses 2'-deoxyribonucleotide-(2'-deoxyribose 5'-phosphate)-2'-deoxyribonucleotide-DNA = a 3'-end 2'-deoxyribonucleotide-(2,3-dehydro-2,3-deoxyribose 5'-phosphate)-DNA + a 5'-end 5'-phospho-2'-deoxyribonucleoside-DNA + H(+). In terms of biological role, involved in base excision repair of DNA damaged by oxidation or by mutagenic agents. Acts as a DNA glycosylase that recognizes and removes damaged bases. Has a preference for oxidized purines, such as 7,8-dihydro-8-oxoguanine (8-oxoG). Has AP (apurinic/apyrimidinic) lyase activity and introduces nicks in the DNA strand. Cleaves the DNA backbone by beta-delta elimination to generate a single-strand break at the site of the removed base with both 3'- and 5'-phosphates. This chain is Formamidopyrimidine-DNA glycosylase, found in Cereibacter sphaeroides (strain ATCC 17025 / ATH 2.4.3) (Rhodobacter sphaeroides).